The primary structure comprises 213 residues: CASP-like protein UU2 (213 aa).

The segment at 1-26 (MEDPKGAWQSDVFDNGRDFKPHDKAP) is disordered. Residues 1–53 (MEDPKGAWQSDVFDNGRDFKPHDKAPANVTAGTTPPMYNVGAGGSEGNSKALS) lie on the Cytoplasmic side of the membrane. Positions 14-25 (DNGRDFKPHDKA) are enriched in basic and acidic residues. Residues 54-74 (IISIVLRCLSIMFNVVSLGVI) form a helical membrane-spanning segment. Residues 75-96 (ASNQGKSYFVVWRTLNSSNMQY) lie on the Extracellular side of the membrane. Asn-90 is a glycosylation site (N-linked (GlcNAc...) asparagine). A helical transmembrane segment spans residues 97 to 117 (LFAINVIVLVYCVVQLILSII). Residues 118 to 137 (NLVQGKMVLSGPTQPASTIT) lie on the Cytoplasmic side of the membrane. A helical transmembrane segment spans residues 138–158 (YICDQGLTYMLMAGFGAGVAL). Residues 159 to 184 (QASVDKGESGMLDCSGANEFCGKNKA) are Extracellular-facing. A helical transmembrane segment spans residues 185-205 (SAALSFLGFVCIALSANLNYL). Residues 206–213 (RLYFMAAK) are Cytoplasmic-facing.

This sequence belongs to the Casparian strip membrane proteins (CASP) family. In terms of assembly, homodimer and heterodimers.

The protein localises to the cell membrane. In Physcomitrium patens (Spreading-leaved earth moss), this protein is CASP-like protein UU2.